A 179-amino-acid polypeptide reads, in one-letter code: UPF0227 protein Shew185_2404 (179 aa).

This sequence belongs to the UPF0227 family.

The sequence is that of UPF0227 protein Shew185_2404 from Shewanella baltica (strain OS185).